A 1569-amino-acid polypeptide reads, in one-letter code: Zinc finger protein GLI3 (1569 aa).

Polar residues-rich tracts occupy residues Met1–Ala10 and Ala416–Gly432. 2 disordered regions span residues Met1–Ser79 and Ser414–Asp461. C2H2-type zinc fingers lie at residues Thr485–His510, Phe518–His545, His551–His575, Tyr581–His606, and Tyr612–His637. 4 disordered regions span residues Asp625–Ser731, Ser899–Pro921, Pro1202–Asp1228, and Ser1335–Gln1364. The span at His637–Pro653 shows a compositional bias: basic and acidic residues. Over residues Ser663–Gly676 the composition is skewed to polar residues. Residues His678–Lys704 are compositionally biased toward basic and acidic residues. The span at Pro705–Ser731 shows a compositional bias: polar residues. Over residues Ser1335–Thr1350 the composition is skewed to low complexity. Residues Ser1352–Gln1364 are compositionally biased toward polar residues.

This sequence belongs to the GLI C2H2-type zinc-finger protein family. Phosphorylation is essential for its proteolytic processing. Post-translationally, the repressor form (GLI3R), a C-terminally truncated form is generated from the full-length GLI3 protein (GLI3FL) through proteolytic processing.

Its subcellular location is the nucleus. It localises to the cytoplasm. Its function is as follows. Has a dual function as a transcriptional activator and a repressor of the sonic hedgehog (Shh) pathway, and may play a role in limb development. May bind to the minimal GLI-consensus sequence 5'-GGGTGGTC-3'. Has an essential role in the early embryonic patterning of mesoderm and neuroectoderm. This is Zinc finger protein GLI3 (gli3) from Xenopus laevis (African clawed frog).